Reading from the N-terminus, the 924-residue chain is DNA repair and recombination protein RDH54 (924 aa).

A compositionally biased stretch (basic and acidic residues) spans M1–P10. Disordered stretches follow at residues M1–K21 and E155–G183. The segment covering T168 to T178 has biased composition (low complexity). The Helicase ATP-binding domain occupies L299 to G487. I346–K353 provides a ligand contact to ATP. Residues N472–N475 carry the DEGH box motif. K615 is covalently cross-linked (Glycyl lysine isopeptide (Lys-Gly) (interchain with G-Cter in ubiquitin)). The 160-residue stretch at K631–S790 folds into the Helicase C-terminal domain.

The protein belongs to the SNF2/RAD54 helicase family. As to quaternary structure, interacts with RAD51 and DMC1.

It is found in the nucleus. The catalysed reaction is ATP + H2O = ADP + phosphate + H(+). Functionally, involved in the recombinational repair of double-strand breaks (DSB) in DNA during mitosis and meiosis. Has DNA dependent ATPase activity. Promotes D-loop (displacement loop) formation with RAD51 recombinase. Modifies the topology of double-stranded DNA during the D-loop reaction to facilitate the invasion of the homologous duplex molecule by the initiating single-stranded DNA substrate. Required for adaptation from G2/M checkpoint arrest induced by a double strand break, by participating in monitoring the extent of single-stranded DNA produced by resection of DNA ends. This role is distinct from its roles in recombination. Promotes colocalization of RAD51 and DMC1 during meiotic recombination. Involved in crossover interference. The polypeptide is DNA repair and recombination protein RDH54 (RDH54) (Saccharomyces cerevisiae (strain JAY291) (Baker's yeast)).